The sequence spans 175 residues: Interferon gamma (175 aa).

The signal sequence occupies residues 1-23 (MNATCCILALLLCLTQAISGCYC). Q24 carries the pyrrolidone carboxylic acid modification. N-linked (GlcNAc...) asparagine glycosylation is found at N39 and N106.

This sequence belongs to the type II (or gamma) interferon family. As to quaternary structure, homodimer. Interacts with IFNGR1 (via extracellular domain); this interaction promotes IFNGR1 dimerization. As to expression, released primarily from activated T lymphocytes.

The protein resides in the secreted. In terms of biological role, type II interferon produced by immune cells such as T-cells and NK cells that plays crucial roles in antimicrobial, antiviral, and antitumor responses by activating effector immune cells and enhancing antigen presentation. Primarily signals through the JAK-STAT pathway after interaction with its receptor IFNGR1 to affect gene regulation. Upon IFNG binding, IFNGR1 intracellular domain opens out to allow association of downstream signaling components JAK2, JAK1 and STAT1, leading to STAT1 activation, nuclear translocation and transcription of IFNG-regulated genes. Many of the induced genes are transcription factors such as IRF1 that are able to further drive regulation of a next wave of transcription. Plays a role in class I antigen presentation pathway by inducing a replacement of catalytic proteasome subunits with immunoproteasome subunits. In turn, increases the quantity, quality, and repertoire of peptides for class I MHC loading. Increases the efficiency of peptide generation also by inducing the expression of activator PA28 that associates with the proteasome and alters its proteolytic cleavage preference. Up-regulates as well MHC II complexes on the cell surface by promoting expression of several key molecules such as cathepsins B/CTSB, H/CTSH, and L/CTSL. Participates in the regulation of hematopoietic stem cells during development and under homeostatic conditions by affecting their development, quiescence, and differentiation. The chain is Interferon gamma (IFNG) from Peromyscus maniculatus (North American deer mouse).